A 1060-amino-acid polypeptide reads, in one-letter code: Anoctamin-8 (1060 aa).

Positions 1-32 (MAEAASGAGDVTLEGERGKRPPPEGEPAAPAS) are disordered. Residue alanine 2 is modified to N-acetylalanine. At 2-244 (AEAASGAGDV…DDICDYFGVK (243 aa)) the chain is on the cytoplasmic side. A compositionally biased stretch (basic and acidic residues) spans 14 to 23 (EGERGKRPPP). The helical transmembrane segment at 245–265 (IAMYFAWLGFYTSAMVYPAVF) threads the bilayer. Residues 266–281 (GSVLYTFTEADQTSRD) lie on the Extracellular side of the membrane. A helical transmembrane segment spans residues 282–302 (VSCVVFALFNVIWSTLFLEEW). At 303 to 356 (KRRGAELAYKWGTLDSPGEAVEEPRPQFRGIRRISPITRAEEFYYPPWKRLLFQ) the chain is on the cytoplasmic side. At serine 318 the chain carries Phosphoserine. The helical transmembrane segment at 357–377 (LLVSLPLCLACLICVFILMLG) threads the bilayer. Over 378 to 400 (CFQLQELVLSVKGLPRLVRFLPK) the chain is Extracellular. Residues 401 to 421 (VMLALLVSVSAEGYKKLAVWL) traverse the membrane as a helical segment. Residues 422 to 437 (NDMENYRLESTYERHL) are Cytoplasmic-facing. Residues 438–458 (IIKVVLFQFVNSYLSLFYIGF) traverse the membrane as a helical segment. The Extracellular portion of the chain corresponds to 459 to 745 (YLKDMDRLKE…YEDTFQDYQE (287 aa)). 4 disordered regions span residues 529 to 605 (AQAD…SLLD), 619 to 640 (GAGRRRPGPSPDGLLEEGSPTM), 653 to 672 (AEEDDEPEGPPGSPGPEPQT), and 680 to 723 (GEGR…HSPQ). Residues 534–547 (GGAGSRRCLGGGCG) are compositionally biased toward gly residues. 2 stretches are compositionally biased toward acidic residues: residues 549–559 (PEEENEEEEEA) and 581–602 (EEDEEEDDDEDEDEEYEGEEGS). Serine 665 is modified (phosphoserine). The segment covering 680–694 (GEGRDQGPDGDRDTE) has biased composition (basic and acidic residues). Residue asparagine 708 is glycosylated (N-linked (GlcNAc...) asparagine). A helical transmembrane segment spans residues 746–766 (MFVQFGYVVLFSSAFPLAALC). Residues 767–802 (ALVNNLIEIRSDAFKLCTGLQRPFGRRVESIGQWQK) lie on the Cytoplasmic side of the membrane. A Phosphoserine modification is found at serine 796. A helical transmembrane segment spans residues 803–823 (VMEAMGVLAIVVNCYLIGQCG). Over 824 to 836 (QLQRLFPWLSPEA) the chain is Extracellular. A helical transmembrane segment spans residues 837-857 (AIVSVVVLEHLALLVKYLIHV). Residues 858 to 1060 (AIPDIPGWVA…PRPEDAGHRP (203 aa)) are Cytoplasmic-facing. The tract at residues 884-1060 (HERQAQQRFQ…PRPEDAGHRP (177 aa)) is disordered. Composition is skewed to basic and acidic residues over residues 899–927 (RREEEERQRHAEQQARRERDTGGREEARA) and 935–950 (VAERGAAKAKGSERPR). The segment covering 972-986 (TRPPAPTGCAPPPRS) has biased composition (pro residues). An Asymmetric dimethylarginine; alternate modification is found at arginine 991. At arginine 991 the chain carries Omega-N-methylarginine; alternate. The residue at position 999 (arginine 999) is an Omega-N-methylarginine. Basic and acidic residues predominate over residues 1049-1060 (PEPRPEDAGHRP).

The protein belongs to the anoctamin family. As to expression, predominant expression seen in epithelial tissues.

Its subcellular location is the cell membrane. Its function is as follows. Does not exhibit calcium-activated chloride channel (CaCC) activity. This Mus musculus (Mouse) protein is Anoctamin-8 (Ano8).